A 105-amino-acid chain; its full sequence is Urease subunit beta (105 aa).

It belongs to the urease beta subunit family. In terms of assembly, heterotrimer of UreA (gamma), UreB (beta) and UreC (alpha) subunits. Three heterotrimers associate to form the active enzyme.

Its subcellular location is the cytoplasm. The enzyme catalyses urea + 2 H2O + H(+) = hydrogencarbonate + 2 NH4(+). The protein operates within nitrogen metabolism; urea degradation; CO(2) and NH(3) from urea (urease route): step 1/1. The protein is Urease subunit beta of Pseudomonas putida (strain ATCC 47054 / DSM 6125 / CFBP 8728 / NCIMB 11950 / KT2440).